The sequence spans 566 residues: Endoglucanase B (566 aa).

The first 30 residues, 1–30 (MKKRRSSKVILSLAIVVALLAAVEPNAALA), serve as a signal peptide directing secretion. E177 functions as the Proton donor in the catalytic mechanism. E299 functions as the Nucleophile in the catalytic mechanism.

This sequence belongs to the glycosyl hydrolase 5 (cellulase A) family.

It catalyses the reaction Endohydrolysis of (1-&gt;4)-beta-D-glucosidic linkages in cellulose, lichenin and cereal beta-D-glucans.. This chain is Endoglucanase B (celB), found in Paenibacillus lautus (Bacillus lautus).